The primary structure comprises 186 residues: MSEAEYLGGRLLLAMPGMGDPRFDHAVIAMCVHDEHGALGIGVGHVREGITLHGLLEDVGIDPGLAPDMPVLNGGPVETARGFVLHSDDWGGEGSVTVNGLCCLSASLDILRAIAEGRGPSRFVIALGYAGWGGGQLEGEMRRHGWYAAQGRPEILFETPTGRRWTQAWKREGIDPAHLVGQTGSA.

Belongs to the UPF0301 (AlgH) family.

This is UPF0301 protein Saro_0683 from Novosphingobium aromaticivorans (strain ATCC 700278 / DSM 12444 / CCUG 56034 / CIP 105152 / NBRC 16084 / F199).